We begin with the raw amino-acid sequence, 662 residues long: DNA topoisomerase 4 subunit B (662 aa).

ATP-binding positions include Tyr-20, Asn-60, Asp-87, 129–135 (GLHGVGI), and Lys-359. A Toprim domain is found at 439 to 553 (TELFIVEGDS…EGHLYLAKPP (115 aa)). Glu-445, Asp-518, and Asp-520 together coordinate Mg(2+).

The protein belongs to the type II topoisomerase family. ParE type 1 subfamily. As to quaternary structure, heterotetramer composed of ParC and ParE. The cofactor is Mg(2+). Mn(2+) is required as a cofactor. Requires Ca(2+) as cofactor.

The catalysed reaction is ATP-dependent breakage, passage and rejoining of double-stranded DNA.. Functionally, topoisomerase IV is essential for chromosome segregation. It relaxes supercoiled DNA. Performs the decatenation events required during the replication of a circular DNA molecule. This chain is DNA topoisomerase 4 subunit B, found in Rickettsia prowazekii (strain Madrid E).